The primary structure comprises 89 residues: Myrmicitoxin(1)-Pr2a (89 aa).

A signal peptide spans 1-23 (MEIPKLLYIAVIAIGLSGSLTCA). Positions 24–61 (TPLANPWADPEAEANPEAKAIAEATAEAIAEALAEPEP) are excised as a propeptide. Asn-88 carries the asparagine amide modification.

This sequence belongs to the formicidae venom clade 1 family. Expressed by the venom gland.

It localises to the secreted. Functionally, vertebrate-selective toxin that causes pain by targeting voltage-gated sodium channels. This Pogonomyrmex rugosus (Desert harvester ant) protein is Myrmicitoxin(1)-Pr2a.